The following is a 610-amino-acid chain: Zinc metalloproteinase-disintegrin-like 4a (610 aa).

The N-terminal stretch at 1 to 20 (MIQVLLVTISLAVFPYQGSS) is a signal peptide. Residues 21–189 (VILESGNVND…KKASQSNLTP (169 aa)) constitute a propeptide that is removed on maturation. The region spanning 199 to 395 (KYVKLFLVAD…NMPQCILKKP (197 aa)) is the Peptidase M12B domain. N218 carries N-linked (GlcNAc...) asparagine glycosylation. D286 is a binding site for Ca(2+). 3 disulfides stabilise this stretch: C310–C390, C350–C374, and C352–C357. H335 serves as a coordination point for Zn(2+). The active site involves E336. Residues H339 and H345 each coordinate Zn(2+). Positions 390, 405, 408, 410, 412, 415, and 418 each coordinate Ca(2+). The Disintegrin domain occupies 403–488 (PAVCGNYFVE…AECTDSFQRN (86 aa)). 14 cysteine pairs are disulfide-bonded: C406/C435, C417/C430, C419/C425, C429/C452, C443/C449, C448/C474, C461/C481, C468/C499, C492/C504, C511/C561, C526/C572, C539/C549, C556/C598, and C592/C603. A D/ECD-tripeptide motif is present at residues 467–469 (ECD).

The protein belongs to the venom metalloproteinase (M12B) family. P-III subfamily. It depends on Zn(2+) as a cofactor. In terms of tissue distribution, expressed by the venom gland.

Its subcellular location is the secreted. In terms of biological role, snake venom metalloproteinase that impairs hemostasis in the envenomed animal. In Crotalus adamanteus (Eastern diamondback rattlesnake), this protein is Zinc metalloproteinase-disintegrin-like 4a.